The chain runs to 119 residues: Holo-[acyl-carrier-protein] synthase (119 aa).

Positions 7 and 53 each coordinate Mg(2+).

The protein belongs to the P-Pant transferase superfamily. AcpS family. Mg(2+) serves as cofactor.

It is found in the cytoplasm. The enzyme catalyses apo-[ACP] + CoA = holo-[ACP] + adenosine 3',5'-bisphosphate + H(+). Its function is as follows. Transfers the 4'-phosphopantetheine moiety from coenzyme A to a Ser of acyl-carrier-protein. The polypeptide is Holo-[acyl-carrier-protein] synthase (Dehalococcoides mccartyi (strain CBDB1)).